The chain runs to 204 residues: MSVSMDHRVLALAGVAQALQQVRRIAETGHSEAATVRTAMDSVFRVDAASPEAVYGSAAALAPGLRLLHNYFRNQGQDEVLPRLALAVLQLERRFVRDASTVATVASGIDAAARQAQQLGDSSHPDVLGSLGGLYAQTISHLRPKVMVQGNPHYLGQAGVVAEIRALLLAALRSAVLWRQMGGSLWDFLFAKRAMIEAVDRALR.

It belongs to the HflD family.

The protein resides in the cytoplasm. It is found in the cell inner membrane. In Xanthomonas axonopodis pv. citri (strain 306), this protein is High frequency lysogenization protein HflD homolog.